Reading from the N-terminus, the 395-residue chain is Elongation factor Tu (395 aa).

One can recognise a tr-type G domain in the interval 10–204 (KPHVNVGTIG…AVDEYIPEPT (195 aa)). The G1 stretch occupies residues 19–26 (GHVDHGKT). 19–26 (GHVDHGKT) serves as a coordination point for GTP. A Mg(2+)-binding site is contributed by threonine 26. The G2 stretch occupies residues 60-64 (GITIA). Residues 81–84 (DCPG) form a G3 region. Residues 81 to 85 (DCPGH) and 136 to 139 (NKVD) contribute to the GTP site. The G4 stretch occupies residues 136–139 (NKVD). The interval 174–176 (SAL) is G5.

It belongs to the TRAFAC class translation factor GTPase superfamily. Classic translation factor GTPase family. EF-Tu/EF-1A subfamily. In terms of assembly, monomer.

It is found in the cytoplasm. It catalyses the reaction GTP + H2O = GDP + phosphate + H(+). Functionally, GTP hydrolase that promotes the GTP-dependent binding of aminoacyl-tRNA to the A-site of ribosomes during protein biosynthesis. This is Elongation factor Tu from Exiguobacterium sibiricum (strain DSM 17290 / CCUG 55495 / CIP 109462 / JCM 13490 / 255-15).